The sequence spans 335 residues: MTTVTVTTEIPPRDKMEDNSALYESTSAHIIEETEYVKKIRTTLQKIRTQMFKDEIRHDSTNHKLDAKHCGNLQQGSDSEMDPSCCSLDLLMKKIKGKDLQLLEMNKENEVLKIKLQASREAGAAALRNVAQRLFENYQTQSEEVRKKQEDSKQLLQVNKLEKEQKLKQHVENLNQVAEKLEEKHSQITELENLVQRMEKEKRTLLERKLSLENKLLQLKSSATYGKSCQDLQREISILQEQISHLQFVIHSQHQNLRSVIQEMEGLKNNLKEQDKRIENLREKVNILEAQNKELKTQVALSSETPRTKVSKAVSTSELKTEGVSPYLMLIRLRK.

A coiled-coil region spans residues 101–305 (QLLEMNKENE…KTQVALSSET (205 aa)).

As to quaternary structure, interacts with CEP170. As to expression, expressed in bone marrow, colon, small intestine, spleen, testis, trachea and cutaneous T-cell lymphoma (CTCL).

It localises to the cytoplasm. The protein resides in the cytoskeleton. The protein localises to the microtubule organizing center. It is found in the centrosome. Its subcellular location is the centriole. In terms of biological role, centriolar protein required for centriole subdistal appendage assembly and microtubule anchoring in interphase cells. Together with CCDC120, cooperate with subdistal appendage components ODF2, NIN and CEP170 for hierarchical subdistal appendage assembly. In Homo sapiens (Human), this protein is Coiled-coil domain-containing protein 68 (CCDC68).